A 236-amino-acid chain; its full sequence is Ribose-5-phosphate isomerase A (236 aa).

Substrate contacts are provided by residues 33–36 (TGST), 90–93 (DGAD), and 103–106 (KGGG). Glutamate 112 functions as the Proton acceptor in the catalytic mechanism. Lysine 130 contacts substrate.

It belongs to the ribose 5-phosphate isomerase family. As to quaternary structure, homodimer.

The enzyme catalyses aldehydo-D-ribose 5-phosphate = D-ribulose 5-phosphate. Its pathway is carbohydrate degradation; pentose phosphate pathway; D-ribose 5-phosphate from D-ribulose 5-phosphate (non-oxidative stage): step 1/1. Functionally, catalyzes the reversible conversion of ribose-5-phosphate to ribulose 5-phosphate. This is Ribose-5-phosphate isomerase A from Trichormus variabilis (strain ATCC 29413 / PCC 7937) (Anabaena variabilis).